The chain runs to 493 residues: Glutamyl-tRNA(Gln) amidotransferase subunit A (493 aa).

Residues Lys79 and Ser159 each act as charge relay system in the active site. Ser183 acts as the Acyl-ester intermediate in catalysis.

It belongs to the amidase family. GatA subfamily. In terms of assembly, heterotrimer of A, B and C subunits.

The catalysed reaction is L-glutamyl-tRNA(Gln) + L-glutamine + ATP + H2O = L-glutaminyl-tRNA(Gln) + L-glutamate + ADP + phosphate + H(+). Its function is as follows. Allows the formation of correctly charged Gln-tRNA(Gln) through the transamidation of misacylated Glu-tRNA(Gln) in organisms which lack glutaminyl-tRNA synthetase. The reaction takes place in the presence of glutamine and ATP through an activated gamma-phospho-Glu-tRNA(Gln). This chain is Glutamyl-tRNA(Gln) amidotransferase subunit A, found in Chelativorans sp. (strain BNC1).